Consider the following 267-residue polypeptide: Tryptophan synthase alpha chain (267 aa).

Catalysis depends on proton acceptor residues glutamate 47 and aspartate 58.

The protein belongs to the TrpA family. In terms of assembly, tetramer of two alpha and two beta chains.

The enzyme catalyses (1S,2R)-1-C-(indol-3-yl)glycerol 3-phosphate + L-serine = D-glyceraldehyde 3-phosphate + L-tryptophan + H2O. It functions in the pathway amino-acid biosynthesis; L-tryptophan biosynthesis; L-tryptophan from chorismate: step 5/5. In terms of biological role, the alpha subunit is responsible for the aldol cleavage of indoleglycerol phosphate to indole and glyceraldehyde 3-phosphate. The sequence is that of Tryptophan synthase alpha chain from Chlorobaculum tepidum (strain ATCC 49652 / DSM 12025 / NBRC 103806 / TLS) (Chlorobium tepidum).